The primary structure comprises 498 residues: Germ cell-less protein-like 2 (498 aa).

Positions 33–39 (SRKRKRN) match the Nuclear localization signal motif. The BTB domain occupies 90–160 (SDIKIRALGR…LYTDADLSIT (71 aa)).

As to quaternary structure, interacts with CUL3.

It localises to the nucleus matrix. Its pathway is protein modification; protein ubiquitination. In terms of biological role, possible function in spermatogenesis. Probable substrate-specific adapter of an E3 ubiquitin-protein ligase complex which mediates the ubiquitination and subsequent proteasomal degradation of target proteins. This is Germ cell-less protein-like 2 (Gmcl2) from Mus musculus (Mouse).